We begin with the raw amino-acid sequence, 531 residues long: Calcium-dependent protein kinase 21 (531 aa).

A compositionally biased stretch (basic residues) spans 1-10; it reads MGCFSSKHRK. The disordered stretch occupies residues 1 to 62; it reads MGCFSSKHRK…STPSSNPVSV (62 aa). G2 is lipidated: N-myristoyl glycine. Positions 48–60 are enriched in polar residues; the sequence is IHQQISTPSSNPV. One can recognise a Protein kinase domain in the interval 80–338; sequence YSLGKELGRG…AAQVLEHPWI (259 aa). ATP contacts are provided by residues 86-94 and K109; that span reads LGRGQFGIT. D204 functions as the Proton acceptor in the catalytic mechanism. The residue at position 244 (S244) is a Phosphoserine. Residues 343-373 are autoinhibitory domain; sequence APDKPIDSAVLSRMKQFRAMNKLKKLALKVI. 4 EF-hand domains span residues 380–415, 416–451, 452–487, and 488–522; these read EEIK…LGSR, LSET…RYKL, DRDE…YGMG, and DEAS…GSTQ. D393, D395, S397, T399, E404, D429, D431, N433, T435, E440, D465, D467, S469, H471, E476, D500, D502, D504, R506, and E511 together coordinate Ca(2+).

The protein belongs to the protein kinase superfamily. Ser/Thr protein kinase family. CDPK subfamily. As to quaternary structure, interacts with SLAC1 and ABI1.

The protein resides in the cell membrane. The catalysed reaction is L-seryl-[protein] + ATP = O-phospho-L-seryl-[protein] + ADP + H(+). The enzyme catalyses L-threonyl-[protein] + ATP = O-phospho-L-threonyl-[protein] + ADP + H(+). Activated by calcium. Autophosphorylation may play an important role in the regulation of the kinase activity. Its function is as follows. May play a role in signal transduction pathways that involve calcium as a second messenger. Mediates the phosphorylation and activation of the S-type anion efflux channel SLAC1. The polypeptide is Calcium-dependent protein kinase 21 (CPK21) (Arabidopsis thaliana (Mouse-ear cress)).